Consider the following 189-residue polypeptide: Protein GrpE (189 aa).

Residues 1–10 show a composition bias toward polar residues; that stretch reads MADEQQQTLD. A disordered region spans residues 1-21; that stretch reads MADEQQQTLDPQAPEQTDAPE.

It belongs to the GrpE family. As to quaternary structure, homodimer.

The protein localises to the cytoplasm. Functionally, participates actively in the response to hyperosmotic and heat shock by preventing the aggregation of stress-denatured proteins, in association with DnaK and GrpE. It is the nucleotide exchange factor for DnaK and may function as a thermosensor. Unfolded proteins bind initially to DnaJ; upon interaction with the DnaJ-bound protein, DnaK hydrolyzes its bound ATP, resulting in the formation of a stable complex. GrpE releases ADP from DnaK; ATP binding to DnaK triggers the release of the substrate protein, thus completing the reaction cycle. Several rounds of ATP-dependent interactions between DnaJ, DnaK and GrpE are required for fully efficient folding. The sequence is that of Protein GrpE from Pseudomonas paraeruginosa (strain DSM 24068 / PA7) (Pseudomonas aeruginosa (strain PA7)).